The primary structure comprises 293 residues: Formamidopyrimidine-DNA glycosylase (293 aa).

Pro2 serves as the catalytic Schiff-base intermediate with DNA. The Proton donor role is filled by Glu3. Catalysis depends on Lys58, which acts as the Proton donor; for beta-elimination activity. DNA is bound by residues His104, Arg123, and Lys166. Residues 257-293 (KVYDREGETCKTPACGGTIKRFTQNGRSTFWCPKCQK) form an FPG-type zinc finger. The active-site Proton donor; for delta-elimination activity is the Arg283.

Belongs to the FPG family. Monomer. It depends on Zn(2+) as a cofactor.

The enzyme catalyses Hydrolysis of DNA containing ring-opened 7-methylguanine residues, releasing 2,6-diamino-4-hydroxy-5-(N-methyl)formamidopyrimidine.. It carries out the reaction 2'-deoxyribonucleotide-(2'-deoxyribose 5'-phosphate)-2'-deoxyribonucleotide-DNA = a 3'-end 2'-deoxyribonucleotide-(2,3-dehydro-2,3-deoxyribose 5'-phosphate)-DNA + a 5'-end 5'-phospho-2'-deoxyribonucleoside-DNA + H(+). Involved in base excision repair of DNA damaged by oxidation or by mutagenic agents. Acts as a DNA glycosylase that recognizes and removes damaged bases. Has a preference for oxidized purines, such as 7,8-dihydro-8-oxoguanine (8-oxoG). Has AP (apurinic/apyrimidinic) lyase activity and introduces nicks in the DNA strand. Cleaves the DNA backbone by beta-delta elimination to generate a single-strand break at the site of the removed base with both 3'- and 5'-phosphates. This chain is Formamidopyrimidine-DNA glycosylase, found in Bradyrhizobium diazoefficiens (strain JCM 10833 / BCRC 13528 / IAM 13628 / NBRC 14792 / USDA 110).